The chain runs to 336 residues: tRNA N6-adenosine threonylcarbamoyltransferase (336 aa).

Fe cation contacts are provided by histidine 114 and histidine 118. Substrate is bound by residues 136 to 140, aspartate 169, glycine 182, aspartate 186, and asparagine 275; that span reads LVSGG. Aspartate 301 is a binding site for Fe cation.

Belongs to the KAE1 / TsaD family. Fe(2+) is required as a cofactor.

The protein resides in the cytoplasm. It catalyses the reaction L-threonylcarbamoyladenylate + adenosine(37) in tRNA = N(6)-L-threonylcarbamoyladenosine(37) in tRNA + AMP + H(+). In terms of biological role, required for the formation of a threonylcarbamoyl group on adenosine at position 37 (t(6)A37) in tRNAs that read codons beginning with adenine. Is involved in the transfer of the threonylcarbamoyl moiety of threonylcarbamoyl-AMP (TC-AMP) to the N6 group of A37, together with TsaE and TsaB. TsaD likely plays a direct catalytic role in this reaction. This Streptococcus pneumoniae (strain P1031) protein is tRNA N6-adenosine threonylcarbamoyltransferase.